Here is a 429-residue protein sequence, read N- to C-terminus: 3-phosphoshikimate 1-carboxyvinyltransferase (429 aa).

Positions 20, 21, and 25 each coordinate 3-phosphoshikimate. K20 is a binding site for phosphoenolpyruvate. Positions 89 and 118 each coordinate phosphoenolpyruvate. 3-phosphoshikimate is bound by residues S164, S165, Q166, S192, D311, and K338. Position 166 (Q166) interacts with phosphoenolpyruvate. The active-site Proton acceptor is the D311. 2 residues coordinate phosphoenolpyruvate: R342 and R384.

This sequence belongs to the EPSP synthase family. In terms of assembly, monomer.

The protein localises to the cytoplasm. The catalysed reaction is 3-phosphoshikimate + phosphoenolpyruvate = 5-O-(1-carboxyvinyl)-3-phosphoshikimate + phosphate. Its pathway is metabolic intermediate biosynthesis; chorismate biosynthesis. In terms of biological role, catalyzes the transfer of the enolpyruvyl moiety of phosphoenolpyruvate (PEP) to the 5-hydroxyl of shikimate-3-phosphate (S3P) to produce enolpyruvyl shikimate-3-phosphate and inorganic phosphate. The protein is 3-phosphoshikimate 1-carboxyvinyltransferase of Methanococcus maripaludis (strain DSM 14266 / JCM 13030 / NBRC 101832 / S2 / LL).